The primary structure comprises 179 residues: ATP-dependent protease subunit HslV (179 aa).

T7 is a catalytic residue. Residues G162, C165, and T168 each contribute to the Na(+) site.

The protein belongs to the peptidase T1B family. HslV subfamily. A double ring-shaped homohexamer of HslV is capped on each side by a ring-shaped HslU homohexamer. The assembly of the HslU/HslV complex is dependent on binding of ATP.

It localises to the cytoplasm. The catalysed reaction is ATP-dependent cleavage of peptide bonds with broad specificity.. Allosterically activated by HslU binding. Its function is as follows. Protease subunit of a proteasome-like degradation complex believed to be a general protein degrading machinery. This is ATP-dependent protease subunit HslV from Bordetella avium (strain 197N).